The following is a 247-amino-acid chain: Type III pantothenate kinase (247 aa).

Residue 6–13 (DVGNTSIY) participates in ATP binding. 102-105 (GADL) is a binding site for substrate. The active-site Proton acceptor is the Asp-104. Residue Asp-122 participates in K(+) binding. Thr-125 is an ATP binding site. Thr-176 serves as a coordination point for substrate.

This sequence belongs to the type III pantothenate kinase family. Homodimer. NH4(+) serves as cofactor. It depends on K(+) as a cofactor.

It is found in the cytoplasm. It carries out the reaction (R)-pantothenate + ATP = (R)-4'-phosphopantothenate + ADP + H(+). Its pathway is cofactor biosynthesis; coenzyme A biosynthesis; CoA from (R)-pantothenate: step 1/5. Functionally, catalyzes the phosphorylation of pantothenate (Pan), the first step in CoA biosynthesis. The polypeptide is Type III pantothenate kinase (Acholeplasma laidlawii (strain PG-8A)).